The chain runs to 280 residues: Urease accessory protein UreD (280 aa).

It belongs to the UreD family. As to quaternary structure, ureD, UreF and UreG form a complex that acts as a GTP-hydrolysis-dependent molecular chaperone, activating the urease apoprotein by helping to assemble the nickel containing metallocenter of UreC. The UreE protein probably delivers the nickel.

The protein localises to the cytoplasm. In terms of biological role, required for maturation of urease via the functional incorporation of the urease nickel metallocenter. The chain is Urease accessory protein UreD from Mesorhizobium japonicum (strain LMG 29417 / CECT 9101 / MAFF 303099) (Mesorhizobium loti (strain MAFF 303099)).